A 261-amino-acid polypeptide reads, in one-letter code: Type III pantothenate kinase (261 aa).

ATP is bound at residue 6–13; that stretch reads DVGNTNTV. 107 to 110 contacts substrate; it reads GADR. The active-site Proton acceptor is the Asp109. Position 129 (Asp129) interacts with K(+). An ATP-binding site is contributed by Thr132. Substrate is bound at residue Thr183.

This sequence belongs to the type III pantothenate kinase family. Homodimer. The cofactor is NH4(+). It depends on K(+) as a cofactor.

The protein localises to the cytoplasm. The enzyme catalyses (R)-pantothenate + ATP = (R)-4'-phosphopantothenate + ADP + H(+). Its pathway is cofactor biosynthesis; coenzyme A biosynthesis; CoA from (R)-pantothenate: step 1/5. Its function is as follows. Catalyzes the phosphorylation of pantothenate (Pan), the first step in CoA biosynthesis. In Kosmotoga olearia (strain ATCC BAA-1733 / DSM 21960 / TBF 19.5.1), this protein is Type III pantothenate kinase.